The following is a 569-amino-acid chain: 2-succinyl-5-enolpyruvyl-6-hydroxy-3-cyclohexene-1-carboxylate synthase (569 aa).

This sequence belongs to the TPP enzyme family. MenD subfamily. As to quaternary structure, homodimer. The cofactor is Mg(2+). Mn(2+) serves as cofactor. Thiamine diphosphate is required as a cofactor.

It catalyses the reaction isochorismate + 2-oxoglutarate + H(+) = 5-enolpyruvoyl-6-hydroxy-2-succinyl-cyclohex-3-ene-1-carboxylate + CO2. It participates in quinol/quinone metabolism; 1,4-dihydroxy-2-naphthoate biosynthesis; 1,4-dihydroxy-2-naphthoate from chorismate: step 2/7. It functions in the pathway quinol/quinone metabolism; menaquinone biosynthesis. In terms of biological role, catalyzes the thiamine diphosphate-dependent decarboxylation of 2-oxoglutarate and the subsequent addition of the resulting succinic semialdehyde-thiamine pyrophosphate anion to isochorismate to yield 2-succinyl-5-enolpyruvyl-6-hydroxy-3-cyclohexene-1-carboxylate (SEPHCHC). This is 2-succinyl-5-enolpyruvyl-6-hydroxy-3-cyclohexene-1-carboxylate synthase from Paenarthrobacter aurescens (strain TC1).